A 132-amino-acid polypeptide reads, in one-letter code: Small ribosomal subunit protein uS9 (132 aa).

The protein belongs to the universal ribosomal protein uS9 family.

The polypeptide is Small ribosomal subunit protein uS9 (rps9) (Thermoplasma volcanium (strain ATCC 51530 / DSM 4299 / JCM 9571 / NBRC 15438 / GSS1)).